Consider the following 345-residue polypeptide: Ribosomal RNA small subunit methyltransferase C (345 aa).

Belongs to the methyltransferase superfamily. RsmC family. Monomer.

The protein resides in the cytoplasm. The catalysed reaction is guanosine(1207) in 16S rRNA + S-adenosyl-L-methionine = N(2)-methylguanosine(1207) in 16S rRNA + S-adenosyl-L-homocysteine + H(+). Its function is as follows. Specifically methylates the guanine in position 1207 of 16S rRNA in the 30S particle. The sequence is that of Ribosomal RNA small subunit methyltransferase C from Shewanella denitrificans (strain OS217 / ATCC BAA-1090 / DSM 15013).